Consider the following 120-residue polypeptide: Putative pterin-4-alpha-carbinolamine dehydratase (120 aa).

Belongs to the pterin-4-alpha-carbinolamine dehydratase family.

The enzyme catalyses (4aS,6R)-4a-hydroxy-L-erythro-5,6,7,8-tetrahydrobiopterin = (6R)-L-erythro-6,7-dihydrobiopterin + H2O. In Saccharomyces cerevisiae (strain ATCC 204508 / S288c) (Baker's yeast), this protein is Putative pterin-4-alpha-carbinolamine dehydratase.